A 472-amino-acid chain; its full sequence is Poly(A) polymerase catalytic subunit (472 aa).

Residues D194 and D196 contribute to the active site.

This sequence belongs to the poxviridae poly(A) polymerase catalytic subunit family. Heterodimer of a large (catalytic) subunit and a small (regulatory) subunit.

It carries out the reaction RNA(n) + ATP = RNA(n)-3'-adenine ribonucleotide + diphosphate. Functionally, polymerase that creates the 3'-poly(A) tail of mRNA's. This is Poly(A) polymerase catalytic subunit (PAPL) from Serinus (CNPV).